The sequence spans 512 residues: Kynurenine 3-monooxygenase (512 aa).

The protein belongs to the aromatic-ring hydroxylase family. KMO subfamily. Requires FAD as cofactor.

The protein localises to the mitochondrion outer membrane. The catalysed reaction is L-kynurenine + NADPH + O2 + H(+) = 3-hydroxy-L-kynurenine + NADP(+) + H2O. Its pathway is cofactor biosynthesis; NAD(+) biosynthesis; quinolinate from L-kynurenine: step 1/3. Its function is as follows. Catalyzes the hydroxylation of L-kynurenine (L-Kyn) to form 3-hydroxy-L-kynurenine (L-3OHKyn). Required for synthesis of quinolinic acid. The protein is Kynurenine 3-monooxygenase (nic-3) of Neurospora crassa (strain ATCC 24698 / 74-OR23-1A / CBS 708.71 / DSM 1257 / FGSC 987).